The primary structure comprises 135 residues: Ribonuclease P protein component (135 aa).

This sequence belongs to the RnpA family. As to quaternary structure, consists of a catalytic RNA component (M1 or rnpB) and a protein subunit.

It carries out the reaction Endonucleolytic cleavage of RNA, removing 5'-extranucleotides from tRNA precursor.. In terms of biological role, RNaseP catalyzes the removal of the 5'-leader sequence from pre-tRNA to produce the mature 5'-terminus. It can also cleave other RNA substrates such as 4.5S RNA. The protein component plays an auxiliary but essential role in vivo by binding to the 5'-leader sequence and broadening the substrate specificity of the ribozyme. The chain is Ribonuclease P protein component from Xylella fastidiosa (strain Temecula1 / ATCC 700964).